Here is a 351-residue protein sequence, read N- to C-terminus: Probable RNA methyltransferase BAV1540 (351 aa).

The active-site Proton acceptor is Glu90. The 227-residue stretch at 93–319 (LLPRDGLCVS…VKVRNSAGQD (227 aa)) folds into the Radical SAM core domain. A disulfide bridge connects residues Cys100 and Cys324. [4Fe-4S] cluster-binding residues include Cys107, Cys111, and Cys114. S-adenosyl-L-methionine contacts are provided by residues 152–153 (GE), Ser182, 205–207 (SLH), and Asn281. Catalysis depends on Cys324, which acts as the S-methylcysteine intermediate.

This sequence belongs to the radical SAM superfamily. RlmN family. Requires [4Fe-4S] cluster as cofactor.

The protein resides in the cytoplasm. The polypeptide is Probable RNA methyltransferase BAV1540 (Bordetella avium (strain 197N)).